The sequence spans 195 residues: MSLVPIVVEQTNRGERSYDIFSRLLKDRIVFLGEEINDTTASLVIAQLLFLEAEDPDKDIWLYINSPGGSITAGFAIYDTMQYIKPDVVTLCVGMAASMAAFLLAAGAKGKRFALPNSEIMIHQPLGGMQGQATDIKIHAERILKLRDKLDKILAENTGQPIEKIKADTERDFFMDAEDAKAYGIIDEVLIRNKR.

The active-site Nucleophile is the S98. H123 is a catalytic residue.

This sequence belongs to the peptidase S14 family. In terms of assembly, fourteen ClpP subunits assemble into 2 heptameric rings which stack back to back to give a disk-like structure with a central cavity, resembling the structure of eukaryotic proteasomes.

It localises to the cytoplasm. It carries out the reaction Hydrolysis of proteins to small peptides in the presence of ATP and magnesium. alpha-casein is the usual test substrate. In the absence of ATP, only oligopeptides shorter than five residues are hydrolyzed (such as succinyl-Leu-Tyr-|-NHMec, and Leu-Tyr-Leu-|-Tyr-Trp, in which cleavage of the -Tyr-|-Leu- and -Tyr-|-Trp bonds also occurs).. Cleaves peptides in various proteins in a process that requires ATP hydrolysis. Has a chymotrypsin-like activity. Plays a major role in the degradation of misfolded proteins. The chain is ATP-dependent Clp protease proteolytic subunit from Thermoanaerobacter pseudethanolicus (strain ATCC 33223 / 39E) (Clostridium thermohydrosulfuricum).